Reading from the N-terminus, the 366-residue chain is Carbamoyl phosphate synthase small chain (366 aa).

The tract at residues 1–168 is CPSase; sequence MYGILVLEDG…KETVIYNAED (168 aa). 3 residues coordinate L-glutamine: Ser45, Gly220, and Gly222. The Glutamine amidotransferase type-1 domain occupies 172–363; sequence RCVLIDCGVK…VELGIKFKAE (192 aa). Cys247 serves as the catalytic Nucleophile. L-glutamine is bound by residues Leu248, Gln251, Asn289, Gly291, and Phe292. Residues His336 and Glu338 contribute to the active site.

This sequence belongs to the CarA family. Composed of two chains; the small (or glutamine) chain promotes the hydrolysis of glutamine to ammonia, which is used by the large (or ammonia) chain to synthesize carbamoyl phosphate. Tetramer of heterodimers (alpha,beta)4.

The catalysed reaction is hydrogencarbonate + L-glutamine + 2 ATP + H2O = carbamoyl phosphate + L-glutamate + 2 ADP + phosphate + 2 H(+). The enzyme catalyses L-glutamine + H2O = L-glutamate + NH4(+). It participates in amino-acid biosynthesis; L-arginine biosynthesis; carbamoyl phosphate from bicarbonate: step 1/1. Its pathway is pyrimidine metabolism; UMP biosynthesis via de novo pathway; (S)-dihydroorotate from bicarbonate: step 1/3. Functionally, small subunit of the glutamine-dependent carbamoyl phosphate synthetase (CPSase). CPSase catalyzes the formation of carbamoyl phosphate from the ammonia moiety of glutamine, carbonate, and phosphate donated by ATP, constituting the first step of 2 biosynthetic pathways, one leading to arginine and/or urea and the other to pyrimidine nucleotides. The small subunit (glutamine amidotransferase) binds and cleaves glutamine to supply the large subunit with the substrate ammonia. The chain is Carbamoyl phosphate synthase small chain from Methanococcus maripaludis (strain C5 / ATCC BAA-1333).